Here is a 325-residue protein sequence, read N- to C-terminus: L-lactate dehydrogenase (325 aa).

Residues Val19, Asp40, Lys45, Tyr70, and 84–85 each bind NAD(+); that span reads GA. 2 residues coordinate substrate: Gln87 and Arg93. NAD(+) is bound by residues Thr106, 123 to 125, and Ser148; that span reads AAN. 125-128 contacts substrate; the sequence is NPVD. Residue 153 to 156 coordinates substrate; that stretch reads DSAR. Arg158 and His173 together coordinate beta-D-fructose 1,6-bisphosphate. The active-site Proton acceptor is the His180. At Tyr225 the chain carries Phosphotyrosine. Thr234 contributes to the substrate binding site.

This sequence belongs to the LDH/MDH superfamily. LDH family. Homotetramer.

The protein localises to the cytoplasm. It catalyses the reaction (S)-lactate + NAD(+) = pyruvate + NADH + H(+). It functions in the pathway fermentation; pyruvate fermentation to lactate; (S)-lactate from pyruvate: step 1/1. Its activity is regulated as follows. Allosterically activated by fructose 1,6-bisphosphate (FBP). In terms of biological role, catalyzes the conversion of lactate to pyruvate. This is L-lactate dehydrogenase from Latilactobacillus sakei subsp. sakei (strain 23K) (Lactobacillus sakei subsp. sakei).